Reading from the N-terminus, the 57-residue chain is Large ribosomal subunit protein uL30 (57 aa).

The protein belongs to the universal ribosomal protein uL30 family. Part of the 50S ribosomal subunit.

The chain is Large ribosomal subunit protein uL30 from Acholeplasma laidlawii (strain PG-8A).